Reading from the N-terminus, the 1992-residue chain is E3 ubiquitin-protein ligase TRIP12 (1992 aa).

The span at 1–10 (MSNRPNNNPG) shows a compositional bias: polar residues. Disordered stretches follow at residues 1-398 (MSNR…DDSE), 797-817 (QRKP…SKKD), and 938-1080 (SLLT…ASKD). At S2 the chain carries N-acetylserine. Position 12 is a phosphoserine (S12). Polar residues predominate over residues 18–27 (RNTAGAQPQD). Residues 48 to 70 (DPDRANTSERQKTGQVPKKDNSR) show a composition bias toward basic and acidic residues. A phosphoserine mark is found at S77, S85, and S100. The span at 78–88 (PDYNRTNSPSS) shows a compositional bias: polar residues. Polar residues predominate over residues 119-132 (EQQLKSAQSPSTSK). 2 stretches are compositionally biased toward low complexity: residues 154-166 (SSCV…SEST) and 175-216 (PTKL…SSTV). The residue at position 181 (K181) is an N6-acetyllysine. A compositionally biased stretch (polar residues) spans 280–290 (PGSSKSETSKP). A phosphoserine mark is found at S310 and S312. Over residues 326–338 (QKTTGSCASTSRR) the composition is skewed to polar residues. The span at 346–358 (GAAEARRQEKMAD) shows a compositional bias: basic and acidic residues. Composition is skewed to polar residues over residues 360–371 (ESNQEAVNSSAA) and 803–812 (LANSNTSGYS). The WWE domain maps to 749–836 (MLKKGNAQNT…DPELAKSFIK (88 aa)). S942 is subject to Phosphoserine. Positions 948-973 (TNGSGSMGSTTSVSSGTATAATHAAA) are enriched in low complexity. S991 and S997 each carry phosphoserine. Residues 1001 to 1014 (KRKRLPKRGPRRPK) show a composition bias toward basic residues. Position 1016 is a phosphoserine (S1016). Residues 1017 to 1026 (PPRDDDKVDN) are compositionally biased toward basic and acidic residues. The span at 1029–1040 (KSPTTTQSPKSS) shows a compositional bias: low complexity. The residue at position 1030 (S1030) is a Phosphoserine. The span at 1041 to 1062 (FLASLNPKTWGRLSTQSNSNNI) shows a compositional bias: polar residues. S1317, S1322, S1329, and S1376 each carry phosphoserine. Position 1377 is a phosphothreonine (T1377). Disordered regions lie at residues 1407 to 1433 (SNKD…NAKK) and 1568 to 1587 (TNPE…PRLD). K1425 is subject to N6-acetyllysine. Residue S1427 is modified to Phosphoserine. Positions 1496–1570 (EIIPTSEFIN…AMQRLLDTNP (75 aa)) are K-box. In terms of domain architecture, HECT spans 1885 to 1992 (PDHGYTHDSR…REGQQSFHLS (108 aa)). Residue C1959 is the Glycyl thioester intermediate of the active site.

The protein belongs to the UPL family. K-HECT subfamily. In terms of assembly, interacts with MYC; leading to disrupt interaction with isoform p19ARF/ARF of CDKN2A. Interacts with TRADD; leading to disrupt interaction with isoform p19ARF/ARF of CDKN2A. Interacts with SMARCC1; leading to disrupt interaction with SMARCE1.

It is found in the nucleus. It localises to the nucleoplasm. The catalysed reaction is S-ubiquitinyl-[E2 ubiquitin-conjugating enzyme]-L-cysteine + [acceptor protein]-L-lysine = [E2 ubiquitin-conjugating enzyme]-L-cysteine + N(6)-ubiquitinyl-[acceptor protein]-L-lysine.. It participates in protein modification; protein ubiquitination. E3 ubiquitin-protein ligase involved in ubiquitin fusion degradation (UFD) pathway and regulation of DNA repair. Part of the ubiquitin fusion degradation (UFD) pathway, a process that mediates ubiquitination of protein at their N-terminus, regardless of the presence of lysine residues in target proteins. Acts as a key regulator of DNA damage response by acting as a suppressor of RNF168, an E3 ubiquitin-protein ligase that promotes accumulation of 'Lys-63'-linked histone H2A and H2AX at DNA damage sites, thereby acting as a guard against excessive spreading of ubiquitinated chromatin at damaged chromosomes. In normal cells, mediates ubiquitination and degradation of isoform p19ARF/ARF of CDKN2A, a lysine-less tumor suppressor required for p53/TP53 activation under oncogenic stress. In cancer cells, however, isoform p19ARF/ARF and TRIP12 are located in different cell compartments, preventing isoform p19ARF/ARF ubiquitination and degradation. Does not mediate ubiquitination of isoform p16-INK4a of CDKN2A. Also catalyzes ubiquitination of NAE1 and SMARCE1, leading to their degradation. Ubiquitination and degradation of target proteins is regulated by interaction with proteins such as MYC, TRADD or SMARCC1, which disrupt the interaction between TRIP12 and target proteins. Mediates ubiquitination of ASXL1: following binding to N(6)-methyladenosine methylated DNA, ASXL1 is ubiquitinated by TRIP12, leading to its degradation and subsequent inactivation of the PR-DUB complex. The chain is E3 ubiquitin-protein ligase TRIP12 (TRIP12) from Homo sapiens (Human).